The primary structure comprises 149 residues: Large ribosomal subunit protein uL15 (149 aa).

Positions 8-49 are disordered; the sequence is HDLRPAAGSNKPKTRVGRGEASKGKTAGRGTKGTGARKQVPA. Over residues 31–45 the composition is skewed to low complexity; it reads GKTAGRGTKGTGARK.

It belongs to the universal ribosomal protein uL15 family. In terms of assembly, part of the 50S ribosomal subunit.

Functionally, binds to the 23S rRNA. This is Large ribosomal subunit protein uL15 from Corynebacterium aurimucosum (strain ATCC 700975 / DSM 44827 / CIP 107346 / CN-1) (Corynebacterium nigricans).